Reading from the N-terminus, the 476-residue chain is Exoglucanase-6A (476 aa).

The first 16 residues, 1–16 (MAKFFLTAAFAAAALA), serve as a signal peptide directing secretion. 2 disulfides stabilise this stretch: Cys33-Cys50 and Cys44-Cys60. The CBM1 domain maps to 33–60 (CGGIGFNGPTCCQSGSTCVKQNDWYSQC). The interval 67 to 94 (TTTSTTSTSSSSTTSRATSTTRTGGVTS) is disordered. An O-linked (Man...) threonine glycan is attached at Thr144. A glycan (O-linked (Man...) serine) is linked at Ser153. Trp163 and Asp165 together coordinate substrate. Asn167 carries N-linked (GlcNAc...) asparagine glycosylation. Positions 200-222 (YDLPDRDCAAAASNGEWAIANNG) are substrate binding loop 1. Residue Asp252 is the Proton donor of the active site. 6 residues coordinate substrate: His297, Trp300, Asn336, Trp397, Lys425, and Glu429. Residues 423 to 461 (WVKPGGECDGTSDTTAARYDYHCGLEDALKPAPEAGQWF) are substrate binding loop 2. Asp431 serves as the catalytic Proton acceptor.

The protein belongs to the glycosyl hydrolase 6 (cellulase A) family. Monomer.

The catalysed reaction is Hydrolysis of (1-&gt;4)-beta-D-glucosidic linkages in cellulose and cellotetraose, releasing cellobiose from the non-reducing ends of the chains.. Its function is as follows. Plays a central role in the recycling of plant biomass. The biological conversion of cellulose to glucose generally requires three types of hydrolytic enzymes: (1) Endoglucanases which cut internal beta-1,4-glucosidic bonds; (2) Exocellobiohydrolases that cut the disaccharide cellobiose from the non-reducing end of the cellulose polymer chain; (3) Beta-1,4-glucosidases which hydrolyze the cellobiose and other short cello-oligosaccharides to glucose. The chain is Exoglucanase-6A from Humicola insolens (Soft-rot fungus).